Here is a 497-residue protein sequence, read N- to C-terminus: Hexokinase-1 (497 aa).

A helical transmembrane segment spans residues 4–24; sequence ATVGAAVIGAATVCAVAALIV. Residues 35–487 form the Hexokinase domain; it reads ARAMAILREF…SGIGAALLAA (453 aa). The interval 90 to 228 is hexokinase small subdomain; sequence TGDEAGVFYA…GVDMRVSALV (139 aa). ADP is bound by residues Gly-104, Thr-105, and Asn-106. Thr-194, Lys-195, Asn-229, and Asp-230 together coordinate D-glucose. The interval 229–476 is hexokinase large subdomain; the sequence is NDTVGTLAGG…TSIVFEHSND (248 aa). Residue Thr-253 participates in ADP binding. Positions 256, 284, and 315 each coordinate D-glucose. Gly-441 serves as a coordination point for ADP.

It belongs to the hexokinase family.

Its subcellular location is the plastid. The protein localises to the chloroplast outer membrane. It catalyses the reaction a D-hexose + ATP = a D-hexose 6-phosphate + ADP + H(+). The enzyme catalyses D-fructose + ATP = D-fructose 6-phosphate + ADP + H(+). The catalysed reaction is D-glucose + ATP = D-glucose 6-phosphate + ADP + H(+). The protein operates within carbohydrate metabolism; hexose metabolism. It participates in carbohydrate degradation; glycolysis; D-glyceraldehyde 3-phosphate and glycerone phosphate from D-glucose: step 1/4. Its function is as follows. Fructose and glucose phosphorylating enzyme. In Nicotiana tabacum (Common tobacco), this protein is Hexokinase-1 (HXK1).